Consider the following 354-residue polypeptide: Tyrosine recombinase XerH (354 aa).

The Core-binding (CB) domain occupies 48-134; the sequence is LTKGVKNIDE…AVINFFDFLD (87 aa). The region spanning 163–346 is the Tyr recombinase domain; it reads KLPEFMSKEE…DNDKLKLAAQ (184 aa). Residues R205, K231, H298, R301, and H324 contribute to the active site. Y333 serves as the catalytic O-(3'-phospho-DNA)-tyrosine intermediate.

The protein belongs to the 'phage' integrase family. XerH subfamily.

Its subcellular location is the cytoplasm. With respect to regulation, ftsK is required for efficient recombination. In terms of biological role, site-specific tyrosine recombinase, which acts by catalyzing the cutting and rejoining of the recombining DNA molecules. Binds to the complete atypical dif motif (difH) site and to both halves separately. The polypeptide is Tyrosine recombinase XerH (Campylobacter jejuni subsp. jejuni serotype O:2 (strain ATCC 700819 / NCTC 11168)).